The chain runs to 414 residues: Ornithine aminotransferase (414 aa).

Cysteine 154 and cysteine 163 form a disulfide bridge. Lysine 262 carries the N6-(pyridoxal phosphate)lysine modification.

It belongs to the class-III pyridoxal-phosphate-dependent aminotransferase family. Homodimer. It depends on pyridoxal 5'-phosphate as a cofactor. Post-translationally, the disulfide bond between Cys-154 and Cys-163 is reduced by TRX1 which increases OAT catalytic activity.

It localises to the cytoplasm. The enzyme catalyses a 2-oxocarboxylate + L-ornithine = L-glutamate 5-semialdehyde + an L-alpha-amino acid. It carries out the reaction L-ornithine + 2-oxoglutarate = L-glutamate 5-semialdehyde + L-glutamate. It functions in the pathway amino-acid biosynthesis; L-proline biosynthesis; L-glutamate 5-semialdehyde from L-ornithine: step 1/1. Unlike for mammalian OATs, activity is increased by TRX1-mediated reduction of the disulfide bond between Cys-154 and Cys-163. Binding to TRX1 may also induce conformational changes that facilitate substrate binding. In terms of biological role, catalyzes the transamination of alpha-ketoglutarate with ornithine or N-acetylornithine and of glutamate-5-semialdehyde with glutamate and alanine. In Plasmodium chabaudi chabaudi, this protein is Ornithine aminotransferase.